A 165-amino-acid chain; its full sequence is 3-isopropylmalate dehydratase small subunit (165 aa).

Belongs to the LeuD family. LeuD type 2 subfamily. Heterodimer of LeuC and LeuD.

The catalysed reaction is (2R,3S)-3-isopropylmalate = (2S)-2-isopropylmalate. It functions in the pathway amino-acid biosynthesis; L-leucine biosynthesis; L-leucine from 3-methyl-2-oxobutanoate: step 2/4. In terms of biological role, catalyzes the isomerization between 2-isopropylmalate and 3-isopropylmalate, via the formation of 2-isopropylmaleate. This is 3-isopropylmalate dehydratase small subunit from Saccharolobus islandicus (strain Y.G.57.14 / Yellowstone #1) (Sulfolobus islandicus).